The primary structure comprises 194 residues: dTTP/UTP pyrophosphatase (194 aa).

Asp-73 functions as the Proton acceptor in the catalytic mechanism.

It belongs to the Maf family. YhdE subfamily. The cofactor is a divalent metal cation.

It is found in the cytoplasm. It catalyses the reaction dTTP + H2O = dTMP + diphosphate + H(+). It carries out the reaction UTP + H2O = UMP + diphosphate + H(+). Functionally, nucleoside triphosphate pyrophosphatase that hydrolyzes dTTP and UTP. May have a dual role in cell division arrest and in preventing the incorporation of modified nucleotides into cellular nucleic acids. The chain is dTTP/UTP pyrophosphatase from Geotalea uraniireducens (strain Rf4) (Geobacter uraniireducens).